A 322-amino-acid polypeptide reads, in one-letter code: Protein SEC13 homolog (322 aa).

N-acetylvaline is present on Val-2. 6 WD repeats span residues 11-50 (SHEDMIHDAQMDYYGTRLATCSSDRSVKIFDVRNGGQILI), 55-96 (GHEG…WEKS), 101-144 (GHDS…EVKK), 148-204 (AHTI…QWKE), 210-253 (AHSD…SNTW), and 260-299 (KFNDVVWHVSWSITANILAVSGGDNKVTLWKESVDGQWVC). Ser-184 carries the phosphoserine modification. Ser-309 bears the Phosphoserine mark.

The protein belongs to the WD repeat SEC13 family. In terms of assembly, at the nuclear pore: component of the Y-shaped Nup107-160 subcomplex of the nuclear pore complex (NPC). The Nup107-160 subcomplex includes NUP160, NUP133, NUP107, NUP98, NUP85, NUP43, NUP37, SEH1 and SEC13. At the COPII coat complex: interacts with SEC31A and SEC31B. Interacts with SEC16A. Interacts with SEC16B. Component of the GATOR2 subcomplex, composed of MIOS, SEC13, SEH1L, WDR24 and WDR59. The GATOR2 complex interacts with CASTOR1 and CASTOR2; the interaction is negatively regulated by arginine. The GATOR2 complex interacts with SESN1, SESN2 and SESN3; the interaction is negatively regulated by amino acids.

Its subcellular location is the cytoplasmic vesicle. It is found in the COPII-coated vesicle membrane. The protein resides in the endoplasmic reticulum membrane. It localises to the nucleus. The protein localises to the nuclear pore complex. Its subcellular location is the lysosome membrane. With respect to regulation, the GATOR2 complex is negatively regulated by the upstream amino acid sensors CASTOR1 and SESN2, which sequester the GATOR2 complex in absence of amino acids. In the presence of abundant amino acids, GATOR2 is released from CASTOR1 and SESN2 and activated. In terms of biological role, functions as a component of the nuclear pore complex (NPC) and the COPII coat. At the endoplasmic reticulum, SEC13 is involved in the biogenesis of COPII-coated vesicles. Required for the exit of adipsin (CFD/ADN), an adipocyte-secreted protein from the endoplasmic reticulum. Functionally, as a component of the GATOR2 complex, functions as an activator of the amino acid-sensing branch of the mTORC1 signaling pathway. The GATOR2 complex indirectly activates mTORC1 through the inhibition of the GATOR1 subcomplex. GATOR2 probably acts as an E3 ubiquitin-protein ligase toward GATOR1. In the presence of abundant amino acids, the GATOR2 complex mediates ubiquitination of the NPRL2 core component of the GATOR1 complex, leading to GATOR1 inactivation. In the absence of amino acids, GATOR2 is inhibited, activating the GATOR1 complex. Within the GATOR2 complex, SEC13 and SEH1L are required to stabilize the complex. The sequence is that of Protein SEC13 homolog from Homo sapiens (Human).